We begin with the raw amino-acid sequence, 233 residues long: Ion-translocating oxidoreductase complex subunit E (233 aa).

Helical transmembrane passes span 18–38, 39–59, 69–89, 92–112, 128–148, and 182–202; these read ALVQ…ATNA, LGLG…VSAL, IPIY…LINA, FGLY…CIVI, ALDG…LGAL, and PFLL…LLAG.

The protein belongs to the NqrDE/RnfAE family. The complex is composed of six subunits: RnfA, RnfB, RnfC, RnfD, RnfE and RnfG.

It localises to the cell inner membrane. Functionally, part of a membrane-bound complex that couples electron transfer with translocation of ions across the membrane. This Yersinia pseudotuberculosis serotype IB (strain PB1/+) protein is Ion-translocating oxidoreductase complex subunit E.